An 82-amino-acid polypeptide reads, in one-letter code: Turripeptide Gsp9.2 (82 aa).

The first 23 residues, 1 to 23 (MMAKLMITVMMVLLLSLQQGADG), serve as a signal peptide directing secretion. Residues 24 to 46 (RSERWRKNQMAASSIMRNLITAR) constitute a propeptide that is removed on maturation. A 4-hydroxyproline mark is found at proline 49 and proline 50. Disulfide bonds link cysteine 53-cysteine 68, cysteine 58-cysteine 72, and cysteine 64-cysteine 79. A 4-carboxyglutamate modification is found at glutamate 56.

Belongs to the Pg turripeptide superfamily. Expressed by the venom duct.

The protein localises to the secreted. This Gemmula speciosa (Splendid gem-turris) protein is Turripeptide Gsp9.2.